The sequence spans 285 residues: Shikimate dehydrogenase (NADP(+)) (285 aa).

Shikimate contacts are provided by residues 21 to 23 (SRS) and Thr-68. Lys-72 functions as the Proton acceptor in the catalytic mechanism. An NADP(+)-binding site is contributed by Glu-83. Residues Asn-92 and Asp-107 each coordinate shikimate. NADP(+) is bound by residues 132 to 136 (GAGGS), 156 to 161 (NRTMER), and Leu-221. A shikimate-binding site is contributed by Tyr-223. Gly-244 is a binding site for NADP(+).

This sequence belongs to the shikimate dehydrogenase family. As to quaternary structure, homodimer.

The enzyme catalyses shikimate + NADP(+) = 3-dehydroshikimate + NADPH + H(+). The protein operates within metabolic intermediate biosynthesis; chorismate biosynthesis; chorismate from D-erythrose 4-phosphate and phosphoenolpyruvate: step 4/7. Functionally, involved in the biosynthesis of the chorismate, which leads to the biosynthesis of aromatic amino acids. Catalyzes the reversible NADPH linked reduction of 3-dehydroshikimate (DHSA) to yield shikimate (SA). The polypeptide is Shikimate dehydrogenase (NADP(+)) (Nitrobacter hamburgensis (strain DSM 10229 / NCIMB 13809 / X14)).